Consider the following 398-residue polypeptide: S-adenosylmethionine decarboxylase proenzyme (398 aa).

Residues Glu18 and Glu21 contribute to the active site. The active-site Schiff-base intermediate with substrate; via pyruvic acid is Ser78. A Pyruvic acid (Ser); by autocatalysis modification is found at Ser78. Cys92 serves as the catalytic Proton donor; for catalytic activity. Catalysis depends on proton acceptor; for processing activity residues Ser243 and His256.

This sequence belongs to the eukaryotic AdoMetDC family. Requires pyruvate as cofactor. Is synthesized initially as an inactive proenzyme. Formation of the active enzyme involves a self-maturation process in which the active site pyruvoyl group is generated from an internal serine residue via an autocatalytic post-translational modification. Two non-identical subunits are generated from the proenzyme in this reaction, and the pyruvate is formed at the N-terminus of the alpha chain, which is derived from the carboxyl end of the proenzyme. The post-translation cleavage follows an unusual pathway, termed non-hydrolytic serinolysis, in which the side chain hydroxyl group of the serine supplies its oxygen atom to form the C-terminus of the beta chain, while the remainder of the serine residue undergoes an oxidative deamination to produce ammonia and the pyruvoyl group blocking the N-terminus of the alpha chain.

It catalyses the reaction S-adenosyl-L-methionine + H(+) = S-adenosyl 3-(methylsulfanyl)propylamine + CO2. Its pathway is amine and polyamine biosynthesis; S-adenosylmethioninamine biosynthesis; S-adenosylmethioninamine from S-adenosyl-L-methionine: step 1/1. The sequence is that of S-adenosylmethionine decarboxylase proenzyme (SAMDC) from Oryza sativa subsp. indica (Rice).